The following is a 208-amino-acid chain: Small ribosomal subunit protein uS5 (208 aa).

A disordered region spans residues 1 to 38; it reads MPGRERRDGGRSADDNQKKNDRRGGRRDDRRNQQQDER. In terms of domain architecture, S5 DRBM spans 41–104; sequence YIERVVTINR…EEARKNFFRV (64 aa).

This sequence belongs to the universal ribosomal protein uS5 family. In terms of assembly, part of the 30S ribosomal subunit. Contacts proteins S4 and S8.

Functionally, with S4 and S12 plays an important role in translational accuracy. In terms of biological role, located at the back of the 30S subunit body where it stabilizes the conformation of the head with respect to the body. This Corynebacterium diphtheriae (strain ATCC 700971 / NCTC 13129 / Biotype gravis) protein is Small ribosomal subunit protein uS5.